The primary structure comprises 85 residues: Antibacterial factor-related peptide 1 (85 aa).

Residues 1 to 19 form the signal peptide; that stretch reads MLYFCLLLVLLLPNNGVSS.

In terms of tissue distribution, expressed in the pharynx and body wall muscle.

The protein resides in the secreted. This chain is Antibacterial factor-related peptide 1, found in Caenorhabditis elegans.